We begin with the raw amino-acid sequence, 717 residues long: RNA helicase NPH-II (717 aa).

The Helicase ATP-binding domain maps to Phe-193–Tyr-384. Gly-206–Thr-213 is an ATP binding site. The DEXH box signature appears at Asp-331–His-334. Residues Ile-406–Tyr-566 enclose the Helicase C-terminal domain.

The protein belongs to the DEAD box helicase family. DEAH subfamily. In terms of assembly, monomer.

The protein localises to the virion. The enzyme catalyses ATP + H2O = ADP + phosphate + H(+). In terms of biological role, NTP-dependent helicase that catalyzes unidirectional unwinding of 3'tailed duplex RNAs and plays an important role during transcription of early mRNAs, presumably by preventing R-loop formation behind the elongating RNA polymerase. Might also play a role in the export of newly synthesized mRNA chains out of the core into the cytoplasm. Required for replication and propagation of viral particles. This Melanoplus sanguinipes (Migratory grasshopper) protein is RNA helicase NPH-II (NPH2).